The primary structure comprises 771 residues: Caldesmon (771 aa).

2 disordered regions span residues 23-91 (ERLS…ALLE) and 104-599 (LQEA…FSPK). The interval 26-199 (SYQRNDDDEE…PKEVPTEENQ (174 aa)) is myosin and calmodulin-binding. Tyrosine 27 carries the phosphotyrosine modification. Composition is skewed to basic and acidic residues over residues 47–67 (QERL…EKSE), 104–115 (LQEALERQKEFD), 139–155 (ITGK…RCEI), 170–194 (WRQD…KEVP), 203–215 (AVEK…EVVE), 240–435 (AADK…ESLP), 442–484 (SKKD…RELT), 509–518 (GSEKLKEKQQ), and 525–592 (DELK…EKKP). Tandem repeats lie at residues 251–265 (EREK…RLKA), 266–278 (EEEK…KQKA), 279–291 (EEEK…RERA), 294–306 (EEEK…RERA), 309–321 (EEER…RERA), 324–336 (EEER…RAKA), 337–349 (EEER…RAKA), 350–362 (EEER…RAKA), 363–375 (EKER…RERA), and 378–390 (EEEK…KARL). Residues 251–390 (EREKLEAEEK…KRAAEEKARL (140 aa)) form a 10 X 13 AA approximate tandem repeats region. Residues 523–580 (ELDELKKRREERRKILEEEEQKKKQEEAERKIREEEEKKRMKEEIERRRAEAAEKRQK) form a tropomyosin-binding region. A Phosphoserine; by CDK1 modification is found at serine 597. The interval 612-644 (LNKSAQKSGMKPAHTTAVVSKIDSRLEQYTSAV) is strong actin-binding. The interval 622–632 (KPAHTTAVVSK) is tropomyosin-binding. Phosphotyrosine is present on tyrosine 640. The tract at residues 674-680 (WEKGNVF) is calmodulin-binding. Residues 676 to 771 (KGNVFSSPGG…NGLRQFEKEP (96 aa)) form a disordered region. The span at 679–691 (VFSSPGGTGTPNK) shows a compositional bias: polar residues. Serine 682 carries the post-translational modification Phosphoserine; by CDK1. Threonine 688 and threonine 711 each carry phosphothreonine; by CDK1. Serine 717 is modified (phosphoserine; by CDK1). Residues 723–742 (SDLRPGDVSGKRNLWEKQSV) show a composition bias toward basic and acidic residues. The segment at 726-752 (RPGDVSGKRNLWEKQSVEKPAASSSKV) is weak actin-binding.

It belongs to the caldesmon family. Post-translationally, phosphorylated in non-muscle cells. Phosphorylation by CDK1 during mitosis causes caldesmon to dissociate from microfilaments. Phosphorylation reduces caldesmon binding to actin, myosin, and calmodulin as well as its inhibition of actomyosin ATPase activity. Phosphorylation also occurs in both quiescent and dividing smooth muscle cells with similar effects on the interaction with actin and calmodulin and on microfilaments reorganization. As to expression, high-molecular-weight caldesmon (h-caldesmon) is predominantly expressed in smooth muscles, whereas low-molecular-weight caldesmon (l-caldesmon) is widely distributed in non-muscle tissues and cells. Not expressed in skeletal muscle or heart.

It is found in the cytoplasm. The protein localises to the cytoskeleton. Its subcellular location is the myofibril. It localises to the stress fiber. In terms of biological role, actin- and myosin-binding protein implicated in the regulation of actomyosin interactions in smooth muscle and nonmuscle cells (could act as a bridge between myosin and actin filaments). Stimulates actin binding of tropomyosin which increases the stabilization of actin filament structure. In muscle tissues, inhibits the actomyosin ATPase by binding to F-actin. This inhibition is attenuated by calcium-calmodulin and is potentiated by tropomyosin. Interacts with actin, myosin, two molecules of tropomyosin and with calmodulin. Also plays an essential role during cellular mitosis and receptor capping. In Gallus gallus (Chicken), this protein is Caldesmon (CALD1).